The sequence spans 512 residues: Glutathione-binding protein GsiB (512 aa).

The N-terminal stretch at 1–26 (MARAVHRSGLVALGIATALMASCAFA) is a signal peptide.

The protein belongs to the bacterial solute-binding protein 5 family. As to quaternary structure, the complex is composed of two ATP-binding proteins (GsiA), two transmembrane proteins (GsiC and GsiD) and a solute-binding protein (GsiB).

Its subcellular location is the periplasm. Functionally, part of the ABC transporter complex GsiABCD involved in glutathione import. Binds glutathione. This is Glutathione-binding protein GsiB from Escherichia coli O1:K1 / APEC.